Consider the following 303-residue polypeptide: MHIYILGSAAGGGFPQWNCNCPNCHGVRTGTINAKVRTQSSIAISENGVDWILLNASPDIRQQLFDFKAAQPARKLRDTGITNVILMDSQLDHTTGLLTLREGCPINVWCTEMVYQDLTTGFPVFNMLKHWNGGLQYHQIDPKQAFKIDGFENLEFLPLIIQSAAPPYSPHRHDPHEGDNIALIIKDHKTQKQLFYAPGLGKIDDQIMQIMQDSDCVMIDGTLWTDDEMQQTGVGKKTGREMGHLYISGEGGSLSYLNQLSTPKKVLIHINNTNPILNEDSAQFAELKANDVEVAFDGMQIEL.

The protein belongs to the PqqB family.

The protein operates within cofactor biosynthesis; pyrroloquinoline quinone biosynthesis. Functionally, may be involved in the transport of PQQ or its precursor to the periplasm. In Acinetobacter baumannii (strain AYE), this protein is Coenzyme PQQ synthesis protein B.